A 264-amino-acid polypeptide reads, in one-letter code: 3-methyl-2-oxobutanoate hydroxymethyltransferase (264 aa).

Positions 46 and 85 each coordinate Mg(2+). 3-methyl-2-oxobutanoate-binding positions include 46-47, D85, and K113; that span reads DS. E115 lines the Mg(2+) pocket. E181 (proton acceptor) is an active-site residue.

This sequence belongs to the PanB family. Homodecamer; pentamer of dimers. Mg(2+) is required as a cofactor.

Its subcellular location is the cytoplasm. The catalysed reaction is 3-methyl-2-oxobutanoate + (6R)-5,10-methylene-5,6,7,8-tetrahydrofolate + H2O = 2-dehydropantoate + (6S)-5,6,7,8-tetrahydrofolate. Its pathway is cofactor biosynthesis; (R)-pantothenate biosynthesis; (R)-pantoate from 3-methyl-2-oxobutanoate: step 1/2. Its function is as follows. Catalyzes the reversible reaction in which hydroxymethyl group from 5,10-methylenetetrahydrofolate is transferred onto alpha-ketoisovalerate to form ketopantoate. This Salmonella typhi protein is 3-methyl-2-oxobutanoate hydroxymethyltransferase.